A 558-amino-acid chain; its full sequence is Tektin-5 (558 aa).

Residues 347–381 adopt a coiled-coil conformation; it reads ISEETDVKNKLQTQLAKILQEIFQAENTIMLLERA.

Belongs to the tektin family. In terms of assembly, microtubule inner protein component of sperm flagellar doublet microtubules. Interacts with TEKT3. In terms of processing, ubiquitinated, leading to its degradation. Deubiquitinated by USP16, promoting its stability. As to expression, specifically expressed in testis.

It is found in the cytoplasm. The protein localises to the cytoskeleton. The protein resides in the flagellum axoneme. Its function is as follows. Sperm-specific microtubule inner protein (MIP) part of the dynein-decorated doublet microtubules (DMTs) in flagellar axoneme. Forms an extensive interaction network in different conformations that reinforces the helix bundle composed by other tektin proteins (TEKT1 to TEKT4) and MIPs to anchor the tektin bundle onto the tubulin wall of A-tubule of the sperm flagellum. In Rattus norvegicus (Rat), this protein is Tektin-5.